The chain runs to 61 residues: Metallothionein-2B (61 aa).

Position 1 is an N-acetylmethionine (methionine 1). The beta stretch occupies residues 1–29; that stretch reads MDPNCSCAAGGSCTCAGSCKCKDCRCTSC. Positions 5, 7, 13, 15, 19, 21, 24, 26, 29, 33, 34, 36, 37, 41, 44, 48, 50, 57, 59, and 60 each coordinate a divalent metal cation. Residues 30–61 form an alpha region; the sequence is KKSCCSCCPAGCARCAQGCICKGASDKCSCCA.

Belongs to the metallothionein superfamily. Type 1 family. As to quaternary structure, monomer.

Metallothioneins have a high content of cysteine residues that bind various heavy metals; these proteins are transcriptionally regulated by both heavy metals and glucocorticoids. In Sus scrofa (Pig), this protein is Metallothionein-2B (MT2B).